We begin with the raw amino-acid sequence, 325 residues long: Odorant receptor 131-2 (325 aa).

Residues 1–22 (MNSTSNSSLGNTFISKTLKEKS) are Extracellular-facing. N-linked (GlcNAc...) asparagine glycosylation is found at asparagine 2 and asparagine 6. A helical transmembrane segment spans residues 23–43 (LTVQVLVGILLYVNGLMIFTF). Residues 44 to 54 (LKKETFRDTRY) are Cytoplasmic-facing. Residues 55–75 (ILFAQTLFVDSALMLFADLTL) form a helical membrane-spanning segment. Topologically, residues 76–91 (VGSAYELFIHIISCYI) are extracellular. Cysteines 89 and 170 form a disulfide. The helical transmembrane segment at 92–112 (FCTVMALLSICSPVTLVAMCL) threads the bilayer. The Cytoplasmic portion of the chain corresponds to 113 to 135 (ERYVAICLPLRHASISSPKNTIN). The chain crosses the membrane as a helical span at residues 136-156 (GLLIIWGVSSVIPLFIFIVSF). The Extracellular portion of the chain corresponds to 157 to 190 (TYTPPNAMNSYVVCSNDVMFQVKWLAEMRALSQQ). Residues 191–211 (LLFVIMLCIVGSTYIKIMVAA) form a helical membrane-spanning segment. At 212–227 (KSASAENKKSTYKGLR) the chain is on the cytoplasmic side. The chain crosses the membrane as a helical span at residues 228–248 (TVILHGLQLILGMMQLITPYI). At 249–267 (DILTLKVDIMLFINVKFSN) the chain is on the extracellular side. Residues 268–285 (FMLFWIFPRCLSPLVYGL) traverse the membrane as a helical segment. The Cytoplasmic portion of the chain corresponds to 286-325 (RDKKFYNALKYYAFCGIYVCKKHKIKDSKTIRGAVSIAIY).

The protein belongs to the G-protein coupled receptor 1 family. In terms of assembly, homodimer. Monomer.

The protein localises to the cell membrane. The protein resides in the cytoplasm. Probable olfactory receptor. This Danio rerio (Zebrafish) protein is Odorant receptor 131-2.